A 251-amino-acid chain; its full sequence is Ubiquinone/menaquinone biosynthesis C-methyltransferase UbiE (251 aa).

Residues threonine 74, aspartate 95, 123-124 (NA), and serine 140 contribute to the S-adenosyl-L-methionine site.

Belongs to the class I-like SAM-binding methyltransferase superfamily. MenG/UbiE family.

The catalysed reaction is a 2-demethylmenaquinol + S-adenosyl-L-methionine = a menaquinol + S-adenosyl-L-homocysteine + H(+). The enzyme catalyses a 2-methoxy-6-(all-trans-polyprenyl)benzene-1,4-diol + S-adenosyl-L-methionine = a 5-methoxy-2-methyl-3-(all-trans-polyprenyl)benzene-1,4-diol + S-adenosyl-L-homocysteine + H(+). It functions in the pathway quinol/quinone metabolism; menaquinone biosynthesis; menaquinol from 1,4-dihydroxy-2-naphthoate: step 2/2. Its pathway is cofactor biosynthesis; ubiquinone biosynthesis. In terms of biological role, methyltransferase required for the conversion of demethylmenaquinol (DMKH2) to menaquinol (MKH2) and the conversion of 2-polyprenyl-6-methoxy-1,4-benzoquinol (DDMQH2) to 2-polyprenyl-3-methyl-6-methoxy-1,4-benzoquinol (DMQH2). The polypeptide is Ubiquinone/menaquinone biosynthesis C-methyltransferase UbiE (Yersinia pestis bv. Antiqua (strain Angola)).